The following is a 390-amino-acid chain: 2-deoxy-scyllo-inosose synthase (390 aa).

NAD(+)-binding positions include Asp-42, 73–76, 105–109, 129–130, 140–142, and 151–152; these read EQNK, GVTGN, TT, SLK, and KN. The active site involves Lys-142. Glu-184 is a binding site for Co(2+). Residue Glu-244 is part of the active site. Residues His-247 and His-263 each coordinate Co(2+). The segment at 371-390 is disordered; it reads PPRPAAARTDDAATVLGGAG.

It belongs to the sugar phosphate cyclases superfamily. DOI synthase family. It depends on NAD(+) as a cofactor. Co(2+) serves as cofactor.

The catalysed reaction is D-glucose 6-phosphate = 2-deoxy-L-scyllo-inosose + phosphate. It participates in metabolic intermediate biosynthesis; 2-deoxystreptamine biosynthesis; 2-deoxystreptamine from D-glucose 6-phosphate: step 1/4. Its pathway is antibiotic biosynthesis; kanamycin biosynthesis. Catalyzes the intramolecular carbocycle formation from D-glucose-6-phosphate to 2-deoxy-scyllo-inosose (DOI). The polypeptide is 2-deoxy-scyllo-inosose synthase (kanC) (Streptomyces kanamyceticus).